Consider the following 192-residue polypeptide: Elongation factor P (192 aa).

Belongs to the elongation factor P family.

It localises to the cytoplasm. It participates in protein biosynthesis; polypeptide chain elongation. Its function is as follows. Involved in peptide bond synthesis. Stimulates efficient translation and peptide-bond synthesis on native or reconstituted 70S ribosomes in vitro. Probably functions indirectly by altering the affinity of the ribosome for aminoacyl-tRNA, thus increasing their reactivity as acceptors for peptidyl transferase. This is Elongation factor P from Borrelia hermsii (strain HS1 / DAH).